Reading from the N-terminus, the 76-residue chain is Putative defensin-like protein 62 (76 aa).

Residues 1 to 26 (MDVTKTYVTIFVVAILTISVLIQIQQ) form the signal peptide. Disulfide bonds link Cys30-Cys71, Cys34-Cys57, Cys43-Cys69, and Cys47-Cys70.

This sequence belongs to the DEFL family.

The protein localises to the secreted. The polypeptide is Putative defensin-like protein 62 (Arabidopsis thaliana (Mouse-ear cress)).